Consider the following 248-residue polypeptide: Adenosylcobinamide-GDP ribazoletransferase (248 aa).

The next 6 helical transmembrane spans lie at 36–56 (FFLP…YLGL), 59–79 (FLPS…ITGG), 114–134 (GTIA…SLVL), 137–157 (YSIA…FLCL), 170–190 (IFIG…VLVL), and 199–219 (ATII…LLCL).

It belongs to the CobS family. The cofactor is Mg(2+).

Its subcellular location is the cell membrane. The enzyme catalyses alpha-ribazole + adenosylcob(III)inamide-GDP = adenosylcob(III)alamin + GMP + H(+). It carries out the reaction alpha-ribazole 5'-phosphate + adenosylcob(III)inamide-GDP = adenosylcob(III)alamin 5'-phosphate + GMP + H(+). It participates in cofactor biosynthesis; adenosylcobalamin biosynthesis; adenosylcobalamin from cob(II)yrinate a,c-diamide: step 7/7. Functionally, joins adenosylcobinamide-GDP and alpha-ribazole to generate adenosylcobalamin (Ado-cobalamin). Also synthesizes adenosylcobalamin 5'-phosphate from adenosylcobinamide-GDP and alpha-ribazole 5'-phosphate. The sequence is that of Adenosylcobinamide-GDP ribazoletransferase from Clostridium botulinum (strain Loch Maree / Type A3).